Reading from the N-terminus, the 320-residue chain is Coproporphyrin III ferrochelatase (320 aa).

Fe(2+)-binding residues include H194 and E273.

Belongs to the ferrochelatase family.

It localises to the cytoplasm. It catalyses the reaction Fe-coproporphyrin III + 2 H(+) = coproporphyrin III + Fe(2+). It participates in porphyrin-containing compound metabolism; protoheme biosynthesis. Functionally, involved in coproporphyrin-dependent heme b biosynthesis. Catalyzes the insertion of ferrous iron into coproporphyrin III to form Fe-coproporphyrin III. The sequence is that of Coproporphyrin III ferrochelatase from Symbiobacterium thermophilum (strain DSM 24528 / JCM 14929 / IAM 14863 / T).